Here is a 371-residue protein sequence, read N- to C-terminus: Queuine tRNA-ribosyltransferase (371 aa).

Aspartate 90 serves as the catalytic Nucleophile. Aspartate 90 (proton acceptor) is an active-site residue. Substrate-binding positions include 90-94 (DSGGF), serine 91, aspartate 144, glutamine 189, and glycine 215. The interval 246 to 252 (GVGTPEN) is RNA binding. Residue aspartate 265 is the Nucleophile of the active site. The tract at residues 270–274 (TRNAR) is RNA binding; important for wobble base 34 recognition. 4 residues coordinate Zn(2+): cysteine 303, cysteine 305, cysteine 308, and histidine 334.

This sequence belongs to the queuine tRNA-ribosyltransferase family. As to quaternary structure, homodimer. Within each dimer, one monomer is responsible for RNA recognition and catalysis, while the other monomer binds to the replacement base PreQ1. Requires Zn(2+) as cofactor.

The catalysed reaction is 7-aminomethyl-7-carbaguanine + guanosine(34) in tRNA = 7-aminomethyl-7-carbaguanosine(34) in tRNA + guanine. It functions in the pathway tRNA modification; tRNA-queuosine biosynthesis. Catalyzes the base-exchange of a guanine (G) residue with the queuine precursor 7-aminomethyl-7-deazaguanine (PreQ1) at position 34 (anticodon wobble position) in tRNAs with GU(N) anticodons (tRNA-Asp, -Asn, -His and -Tyr). Catalysis occurs through a double-displacement mechanism. The nucleophile active site attacks the C1' of nucleotide 34 to detach the guanine base from the RNA, forming a covalent enzyme-RNA intermediate. The proton acceptor active site deprotonates the incoming PreQ1, allowing a nucleophilic attack on the C1' of the ribose to form the product. After dissociation, two additional enzymatic reactions on the tRNA convert PreQ1 to queuine (Q), resulting in the hypermodified nucleoside queuosine (7-(((4,5-cis-dihydroxy-2-cyclopenten-1-yl)amino)methyl)-7-deazaguanosine). This chain is Queuine tRNA-ribosyltransferase, found in Helicobacter pylori (strain ATCC 700392 / 26695) (Campylobacter pylori).